The following is a 419-amino-acid chain: Mitogen-activated protein kinase spm1 (419 aa).

In terms of domain architecture, Protein kinase spans 23–314 (YTVTKELGQG…VEEALEHPYL (292 aa)). ATP contacts are provided by residues 29-37 (LGQGAYGIV) and Lys-52. Catalysis depends on Asp-149, which acts as the Proton acceptor.

This sequence belongs to the protein kinase superfamily. Ser/Thr protein kinase family. MAP kinase subfamily. Requires Mg(2+) as cofactor. Post-translationally, phosphorylated by the MAP kinase kinase mkk1.

The enzyme catalyses L-seryl-[protein] + ATP = O-phospho-L-seryl-[protein] + ADP + H(+). It carries out the reaction L-threonyl-[protein] + ATP = O-phospho-L-threonyl-[protein] + ADP + H(+). Functionally, mitogen-activated protein kinase, part of the mkh1-mkk1-spm1 MAPK cascade that regulates vegetative growth, conidial formation, colony surface hydrophobicity, osmotic stress, cell wall integrity maintenance, carbon and nitrogen source utilization, chitin distribution, septa formation, and pathogenicity. The sequence is that of Mitogen-activated protein kinase spm1 from Cytospora mali (Apple Valsa canker fungus).